The chain runs to 393 residues: Formate-dependent phosphoribosylglycinamide formyltransferase (393 aa).

N(1)-(5-phospho-beta-D-ribosyl)glycinamide is bound by residues 22–23 (EL) and Glu-82. Residues Arg-114, Lys-155, 160–165 (SSGHGQ), 195–198 (EGFV), and Glu-203 contribute to the ATP site. In terms of domain architecture, ATP-grasp spans 119–308 (RLAAEELGLP…QFALHARAVL (190 aa)). The Mg(2+) site is built by Glu-267 and Glu-279. Residues Asp-286, Lys-356, and 363 to 364 (RR) contribute to the N(1)-(5-phospho-beta-D-ribosyl)glycinamide site.

This sequence belongs to the PurK/PurT family. In terms of assembly, homodimer.

The enzyme catalyses N(1)-(5-phospho-beta-D-ribosyl)glycinamide + formate + ATP = N(2)-formyl-N(1)-(5-phospho-beta-D-ribosyl)glycinamide + ADP + phosphate + H(+). It participates in purine metabolism; IMP biosynthesis via de novo pathway; N(2)-formyl-N(1)-(5-phospho-D-ribosyl)glycinamide from N(1)-(5-phospho-D-ribosyl)glycinamide (formate route): step 1/1. Functionally, involved in the de novo purine biosynthesis. Catalyzes the transfer of formate to 5-phospho-ribosyl-glycinamide (GAR), producing 5-phospho-ribosyl-N-formylglycinamide (FGAR). Formate is provided by PurU via hydrolysis of 10-formyl-tetrahydrofolate. This Parabacteroides distasonis (strain ATCC 8503 / DSM 20701 / CIP 104284 / JCM 5825 / NCTC 11152) protein is Formate-dependent phosphoribosylglycinamide formyltransferase.